The primary structure comprises 266 residues: Chymotrypsin-like elastase family member 1 (266 aa).

The first 16 residues, 1-16 (MLRFLVFATLVLYGHS), serve as a signal peptide directing secretion. A propeptide spans 17–26 (TQDFPETNAR) (activation peptide). Residues 27 to 264 (VVGGTEAGRN…YISWINKTIA (238 aa)) form the Peptidase S1 domain. A disulfide bridge links cysteine 56 with cysteine 72. The active-site Charge relay system is histidine 71. Ca(2+) is bound by residues aspartate 85, asparagine 87, glutamine 90, and glutamate 95. Asparagine 87 carries an N-linked (GlcNAc...) asparagine glycan. Aspartate 119 acts as the Charge relay system in catalysis. 3 cysteine pairs are disulfide-bonded: cysteine 153-cysteine 220, cysteine 184-cysteine 200, and cysteine 210-cysteine 240. Residue serine 214 is the Charge relay system of the active site. N-linked (GlcNAc...) asparagine glycosylation is found at asparagine 241 and asparagine 260.

Belongs to the peptidase S1 family. Elastase subfamily. Requires Ca(2+) as cofactor.

Its subcellular location is the secreted. It carries out the reaction Hydrolysis of proteins, including elastin. Preferential cleavage: Ala-|-Xaa.. In terms of biological role, serine proteases that hydrolyze many proteins in addition to elastin. The sequence is that of Chymotrypsin-like elastase family member 1 (CELA1) from Macaca fascicularis (Crab-eating macaque).